The following is a 180-amino-acid chain: MSFIDKILDKMSLNSEDDEEFDNEDYYLDDEEEEELPRNPFRRKKEAVEEETAIKSTRRDTTPKEKPVKTTSKITPISKSSRKQVASDMEVCVIKPSSIEDEIEITDTLLNGRTVVINMEGLNVDVAQRIIDFTSGSAYALHGNLQKISNFIFIATPHGVDISGDIQSLMDSFDLPGSSY.

Positions 14 to 81 (NSEDDEEFDN…SKITPISKSS (68 aa)) are disordered. Acidic residues predominate over residues 15–35 (SEDDEEFDNEDYYLDDEEEEE). Positions 57–68 (TRRDTTPKEKPV) are enriched in basic and acidic residues. Low complexity predominate over residues 69 to 79 (KTTSKITPISK).

It belongs to the SepF family. As to quaternary structure, homodimer. Interacts with FtsZ.

Its subcellular location is the cytoplasm. Functionally, cell division protein that is part of the divisome complex and is recruited early to the Z-ring. Probably stimulates Z-ring formation, perhaps through the cross-linking of FtsZ protofilaments. Its function overlaps with FtsA. The protein is Cell division protein SepF of Agathobacter rectalis (strain ATCC 33656 / DSM 3377 / JCM 17463 / KCTC 5835 / VPI 0990) (Eubacterium rectale).